Here is a 153-residue protein sequence, read N- to C-terminus: ATP synthase subunit b' (153 aa).

The chain crosses the membrane as a helical span at residues 23-40 (LMAIQVVALTYILNSLFF).

It belongs to the ATPase B chain family. F-type ATPases have 2 components, F(1) - the catalytic core - and F(0) - the membrane proton channel. F(1) has five subunits: alpha(3), beta(3), gamma(1), delta(1), epsilon(1). F(0) has four main subunits: a(1), b(1), b'(1) and c(10-14). The alpha and beta chains form an alternating ring which encloses part of the gamma chain. F(1) is attached to F(0) by a central stalk formed by the gamma and epsilon chains, while a peripheral stalk is formed by the delta, b and b' chains.

It localises to the cellular thylakoid membrane. F(1)F(0) ATP synthase produces ATP from ADP in the presence of a proton or sodium gradient. F-type ATPases consist of two structural domains, F(1) containing the extramembraneous catalytic core and F(0) containing the membrane proton channel, linked together by a central stalk and a peripheral stalk. During catalysis, ATP synthesis in the catalytic domain of F(1) is coupled via a rotary mechanism of the central stalk subunits to proton translocation. In terms of biological role, component of the F(0) channel, it forms part of the peripheral stalk, linking F(1) to F(0). The b'-subunit is a diverged and duplicated form of b found in plants and photosynthetic bacteria. In Prochlorococcus marinus (strain MIT 9301), this protein is ATP synthase subunit b'.